Reading from the N-terminus, the 269-residue chain is tRNA pseudouridine synthase A (269 aa).

The active-site Nucleophile is the Asp52. Position 110 (Tyr110) interacts with substrate.

This sequence belongs to the tRNA pseudouridine synthase TruA family. In terms of assembly, homodimer.

The enzyme catalyses uridine(38/39/40) in tRNA = pseudouridine(38/39/40) in tRNA. Formation of pseudouridine at positions 38, 39 and 40 in the anticodon stem and loop of transfer RNAs. This Bacteroides thetaiotaomicron (strain ATCC 29148 / DSM 2079 / JCM 5827 / CCUG 10774 / NCTC 10582 / VPI-5482 / E50) protein is tRNA pseudouridine synthase A.